The chain runs to 618 residues: DNA mismatch repair protein MutL (618 aa).

Low complexity predominate over residues 366 to 378 (AEPTAAREPATPR). Residues 366–403 (AEPTAAREPATPRYSDGASGGNGGRQSAGGWPHAQPGY) are disordered. Residues 383–392 (ASGGNGGRQS) are compositionally biased toward gly residues.

The protein belongs to the DNA mismatch repair MutL/HexB family.

This protein is involved in the repair of mismatches in DNA. It is required for dam-dependent methyl-directed DNA mismatch repair. May act as a 'molecular matchmaker', a protein that promotes the formation of a stable complex between two or more DNA-binding proteins in an ATP-dependent manner without itself being part of a final effector complex. In Salmonella typhi, this protein is DNA mismatch repair protein MutL.